Consider the following 259-residue polypeptide: Sorbitol-6-phosphate 2-dehydrogenase (259 aa).

4–33 lines the NAD(+) pocket; that stretch reads VAVVIGGGQTLGAFLCHGLAAEGYRVAVVD. Ser-141 contributes to the substrate binding site. The Proton acceptor role is filled by Tyr-154.

It belongs to the short-chain dehydrogenases/reductases (SDR) family. Homotetramer.

It catalyses the reaction D-sorbitol 6-phosphate + NAD(+) = beta-D-fructose 6-phosphate + NADH + H(+). The protein operates within carbohydrate metabolism; D-sorbitol degradation; D-fructose 6-phosphate from D-sorbitol 6-phosphate: step 1/1. This Escherichia coli (strain K12) protein is Sorbitol-6-phosphate 2-dehydrogenase (srlD).